A 241-amino-acid chain; its full sequence is Pyridoxine 5'-phosphate synthase (241 aa).

N7 is a binding site for 3-amino-2-oxopropyl phosphate. 9–10 (DH) contributes to the 1-deoxy-D-xylulose 5-phosphate binding site. R18 contacts 3-amino-2-oxopropyl phosphate. H43 acts as the Proton acceptor in catalysis. The 1-deoxy-D-xylulose 5-phosphate site is built by R45 and H50. E70 (proton acceptor) is an active-site residue. T100 is a 1-deoxy-D-xylulose 5-phosphate binding site. Residue H190 is the Proton donor of the active site. Residues G191 and 212-213 (GH) contribute to the 3-amino-2-oxopropyl phosphate site.

Belongs to the PNP synthase family. As to quaternary structure, homooctamer; tetramer of dimers.

It localises to the cytoplasm. The catalysed reaction is 3-amino-2-oxopropyl phosphate + 1-deoxy-D-xylulose 5-phosphate = pyridoxine 5'-phosphate + phosphate + 2 H2O + H(+). Its pathway is cofactor biosynthesis; pyridoxine 5'-phosphate biosynthesis; pyridoxine 5'-phosphate from D-erythrose 4-phosphate: step 5/5. Functionally, catalyzes the complicated ring closure reaction between the two acyclic compounds 1-deoxy-D-xylulose-5-phosphate (DXP) and 3-amino-2-oxopropyl phosphate (1-amino-acetone-3-phosphate or AAP) to form pyridoxine 5'-phosphate (PNP) and inorganic phosphate. This Bordetella avium (strain 197N) protein is Pyridoxine 5'-phosphate synthase.